Consider the following 501-residue polypeptide: Aldehyde dehydrogenase, cytosolic 1 (501 aa).

An NAD(+)-binding site is contributed by 246-251; it reads GSTEVG. E269 acts as the Proton acceptor in catalysis. Residue C303 is the Nucleophile of the active site.

This sequence belongs to the aldehyde dehydrogenase family. Homotetramer. As to expression, eye specific, with very high expression in the lens.

The protein localises to the cytoplasm. It carries out the reaction an aldehyde + NAD(+) + H2O = a carboxylate + NADH + 2 H(+). It functions in the pathway alcohol metabolism; ethanol degradation; acetate from ethanol: step 2/2. Functionally, major component of the eye of elephant shrews, which in contrast to other mammals, possesses both a lens- and a non-lens class-1 aldehyde dehydrogenase 1. This eye-specific form is a structural protein of the lens and, in other part of the eye, serves as the major form of ALDH1. Can convert/oxidize retinaldehyde to retinoic acid. The sequence is that of Aldehyde dehydrogenase, cytosolic 1 (ALDH1) from Macroscelides proboscideus (Short-eared elephant shrew).